The sequence spans 251 residues: Putative fatty acid elongase DDB_G0274669 (251 aa).

The next 5 helical transmembrane spans lie at 51–71 (FQIIPIVLVIYLVTIFSIKFL), 82–102 (FISILHNAILCIWSLIMCVGV), 135–155 (WSYIFYISKFYELLDTVIIVL), 177–197 (YITMIQILQFVCLGIAGVLHV), and 211–231 (AFAAAYSINFSFLFLFSKFFV).

It belongs to the ELO family.

It localises to the membrane. The catalysed reaction is a very-long-chain acyl-CoA + malonyl-CoA + H(+) = a very-long-chain 3-oxoacyl-CoA + CO2 + CoA. Could be implicated in synthesis of very long chain fatty acids. The protein is Putative fatty acid elongase DDB_G0274669 of Dictyostelium discoideum (Social amoeba).